The primary structure comprises 377 residues: tRNA-specific 2-thiouridylase MnmA (377 aa).

ATP contacts are provided by residues 8-15 (GMSGGVDS) and methionine 34. The segment at 94–96 (NPD) is interaction with target base in tRNA. Residue cysteine 99 is the Nucleophile of the active site. Cysteine 99 and cysteine 201 form a disulfide bridge. Glycine 123 contacts ATP. The tract at residues 151-153 (KDQ) is interaction with tRNA. The active-site Cysteine persulfide intermediate is cysteine 201. The segment at 315 to 316 (RY) is interaction with tRNA.

It belongs to the MnmA/TRMU family.

The protein localises to the cytoplasm. It carries out the reaction S-sulfanyl-L-cysteinyl-[protein] + uridine(34) in tRNA + AH2 + ATP = 2-thiouridine(34) in tRNA + L-cysteinyl-[protein] + A + AMP + diphosphate + H(+). Catalyzes the 2-thiolation of uridine at the wobble position (U34) of tRNA, leading to the formation of s(2)U34. This Acinetobacter baumannii (strain SDF) protein is tRNA-specific 2-thiouridylase MnmA.